The primary structure comprises 367 residues: Alpha-2-HS-glycoprotein (367 aa).

A signal peptide spans 1 to 18 (MKSLVLLLCLAQLWGCHS). The Cystatin fetuin-A-type 1 domain occupies 27–133 (YRQPNCDDPE…KFSVVYAKCD (107 aa)). 6 cysteine pairs are disulfide-bonded: C32–C358, C89–C100, C114–C132, C146–C149, C208–C219, and C230–C247. S134 carries the phosphoserine modification. Residues S135 and S138 each carry the phosphoserine; by FAM20C modification. In terms of domain architecture, Cystatin fetuin-A-type 2 spans 144-255 (KVCQDCPLLA…TCMVFQTQPV (112 aa)). N156 and N176 each carry an N-linked (GlcNAc...) (complex) asparagine glycan. Positions 255-298 (VSSQPQPEGANEAVPTPVVDPDAPPSPPLGAPGLPPAGSPPDSH) are disordered. An O-linked (GalNAc...) threonine glycan is attached at T270. Pro residues predominate over residues 276 to 293 (DAPPSPPLGAPGLPPAGS). O-linked (GalNAc...) serine glycosylation is found at S280 and S293. A propeptide spans 301–340 (LAAPPGHQLHRAHYDLRHTFMGVVSLGSPSGEVSHPRKTR) (connecting peptide). A Phosphothreonine; by FAM20C modification is found at T319. Phosphoserine; by FAM20C occurs at positions 325, 328, and 330. 2 O-linked (GalNAc...) threonine glycosylation sites follow: T339 and T341. A glycan (O-linked (GalNAc...) serine) is linked at S346.

This sequence belongs to the fetuin family. In terms of assembly, alpha-2-HS glycoprotein derives from this precursor, when the connecting peptide is cleaved off. The two chains A and B are held together by a single disulfide bond. In terms of processing, phosphorylated by FAM20C in the extracellular medium. Post-translationally, O- and N-glycosylated. O-glycosylated with core 1 or possibly core 8 glycans. N-glycan at Asn-156: Hex5HexNAc4; N-glycan heterogeneity at Asn-176: Hex5HexNAc4 (major) and Hex6HexNAc5 (minor). In terms of tissue distribution, synthesized in liver and selectively concentrated in bone matrix. Secreted in plasma. It is also found in dentin in much higher quantities than other plasma proteins.

It is found in the secreted. Functionally, promotes endocytosis, possesses opsonic properties and influences the mineral phase of bone. Shows affinity for calcium and barium ions. The chain is Alpha-2-HS-glycoprotein (AHSG) from Homo sapiens (Human).